Consider the following 314-residue polypeptide: 2-dehydro-3-deoxygluconokinase (314 aa).

Substrate-binding positions include 28-32 (GDTLN), Y88, 102-104 (YWR), and R170. ATP contacts are provided by residues 168-170 (NYR), 228-233 (KCGKNG), and 260-263 (SAGD). Position 263 (D263) interacts with substrate. D263 acts as the Proton acceptor in catalysis.

The protein belongs to the carbohydrate kinase PfkB family.

The catalysed reaction is 2-dehydro-3-deoxy-D-gluconate + ATP = 2-dehydro-3-deoxy-6-phospho-D-gluconate + ADP + H(+). It functions in the pathway carbohydrate acid metabolism; 2-dehydro-3-deoxy-D-gluconate degradation; D-glyceraldehyde 3-phosphate and pyruvate from 2-dehydro-3-deoxy-D-gluconate: step 1/2. Catalyzes the phosphorylation of 2-keto-3-deoxygluconate (KDG) to produce 2-keto-3-deoxy-6-phosphogluconate (KDPG). The polypeptide is 2-dehydro-3-deoxygluconokinase (kdgK) (Haemophilus influenzae (strain ATCC 51907 / DSM 11121 / KW20 / Rd)).